Consider the following 189-residue polypeptide: Interferon alpha-5 (189 aa).

The N-terminal stretch at 1–21 is a signal peptide; that stretch reads MALPFVLLMALVVLNCKSICS. 2 disulfides stabilise this stretch: cysteine 24–cysteine 122 and cysteine 52–cysteine 162.

The protein belongs to the alpha/beta interferon family.

The protein localises to the secreted. In terms of biological role, produced by macrophages, IFN-alpha have antiviral activities. Interferon stimulates the production of two enzymes: a protein kinase and an oligoadenylate synthetase. The polypeptide is Interferon alpha-5 (IFNA5) (Homo sapiens (Human)).